Reading from the N-terminus, the 289-residue chain is MAKWLGAPLARGVSTATRAKDSDRQDACRILDDALRDGELSMEEHRERVSAATKAVTLGDLQRLVADLQVESAPAQMPALKSRAKRTELGLLAAAFVASVLLGVGIGWGVYGNTRSPLDFTSDPGAKPDGIAPVVLTPPRQLHSLGGLTGLLEQTRKRFGDTMGYRLVIYPEYASLDRVDPADDRRVLAYTYRGGWGDATSSAKSIADVSVVDLSKFDAKTAVGIMRGAPETLGLKQSDVKSMYLIVDPAKDPTTPAALSLSLYVSSDYGGGYLVFAGDGTIKHVSYPS.

Positions 1–19 (MAKWLGAPLARGVSTATRA) are cleaved as a signal peptide. A run of 2 helical transmembrane segments spans residues 90–110 (GLLA…GWGV) and 257–277 (AALS…LVFA).

It localises to the cell membrane. This is an uncharacterized protein from Mycobacterium tuberculosis (strain CDC 1551 / Oshkosh).